The primary structure comprises 147 residues: Cytochrome c-type biogenesis protein CcmE (147 aa).

The Cytoplasmic segment spans residues 1–7 (MKPRHKR). A helical; Signal-anchor for type II membrane protein membrane pass occupies residues 8–28 (AAIIAGGLAALGIAAYLVLNA). Over 29-147 (FQSNLVFFFS…QIQKTIKSLK (119 aa)) the chain is Periplasmic. Heme-binding residues include His-121 and Tyr-125.

This sequence belongs to the CcmE/CycJ family.

The protein localises to the cell inner membrane. Heme chaperone required for the biogenesis of c-type cytochromes. Transiently binds heme delivered by CcmC and transfers the heme to apo-cytochromes in a process facilitated by CcmF and CcmH. The chain is Cytochrome c-type biogenesis protein CcmE from Albidiferax ferrireducens (strain ATCC BAA-621 / DSM 15236 / T118) (Rhodoferax ferrireducens).